We begin with the raw amino-acid sequence, 560 residues long: 5'-nucleotidase (560 aa).

An N-terminal signal peptide occupies residues 1–21; that stretch reads MNQRLIIKTALSAAILASLAG. Cysteine 22 carries N-palmitoyl cysteine lipidation. Cysteine 22 carries S-diacylglycerol cysteine lipidation. Aspartate 45, histidine 47, aspartate 88, asparagine 120, histidine 221, histidine 256, and glutamine 258 together coordinate a divalent metal cation. Substrate contacts are provided by residues phenylalanine 432 and 501–507; that span reads YNASGGD.

This sequence belongs to the 5'-nucleotidase family. The cofactor is chloride. Mg(2+) serves as cofactor.

Its subcellular location is the cell outer membrane. The enzyme catalyses a ribonucleoside 5'-phosphate + H2O = a ribonucleoside + phosphate. Its function is as follows. Degradation of extracellular 5'-nucleotides for nutritional needs. The chain is 5'-nucleotidase (nutA) from Vibrio parahaemolyticus serotype O3:K6 (strain RIMD 2210633).